The chain runs to 182 residues: MEGETAAKAAASSSSSPSRYESQKRRDWNTFLQYLRNHKPPLNLSRCSGAHVLEFLKYLDQFGKTKVHATACPFFGQPNPPSQCTCPLKQAWGSLDALIGRLRAAFEEIGGGLPESNPFAAKAVRIYLKEVRQTQAKARGIPYDKKKRKRPHTDTATPIAGDGDDAEGSGGAALVVTAATTV.

Over residues 1–16 (MEGETAAKAAASSSSS) the composition is skewed to low complexity. 2 disordered regions span residues 1–22 (MEGE…RYES) and 138–168 (ARGI…DAEG). Residues 19-147 (RYESQKRRDW…ARGIPYDKKK (129 aa)) enclose the ALOG domain. Positions 145–149 (KKKRK) match the Nuclear localization signal motif.

The protein belongs to the plant homeotic and developmental regulators ALOG protein family.

The protein localises to the nucleus. Its function is as follows. Probable transcription regulator that acts as a developmental regulator by promoting cell growth in response to light. This Arabidopsis thaliana (Mouse-ear cress) protein is Protein LIGHT-DEPENDENT SHORT HYPOCOTYLS 5 (LSH5).